A 360-amino-acid polypeptide reads, in one-letter code: 3-dehydroquinate synthase (360 aa).

NAD(+) contacts are provided by residues 72-77 (DGEEFK), 106-110 (GVVGD), 130-131 (TT), Lys-143, Lys-152, and 170-173 (TLTT). Positions 185, 248, and 265 each coordinate Zn(2+).

This sequence belongs to the sugar phosphate cyclases superfamily. Dehydroquinate synthase family. Requires Co(2+) as cofactor. Zn(2+) is required as a cofactor. It depends on NAD(+) as a cofactor.

The protein localises to the cytoplasm. The catalysed reaction is 7-phospho-2-dehydro-3-deoxy-D-arabino-heptonate = 3-dehydroquinate + phosphate. The protein operates within metabolic intermediate biosynthesis; chorismate biosynthesis; chorismate from D-erythrose 4-phosphate and phosphoenolpyruvate: step 2/7. Functionally, catalyzes the conversion of 3-deoxy-D-arabino-heptulosonate 7-phosphate (DAHP) to dehydroquinate (DHQ). The sequence is that of 3-dehydroquinate synthase from Geobacter metallireducens (strain ATCC 53774 / DSM 7210 / GS-15).